The sequence spans 125 residues: Prefoldin subunit beta (125 aa).

This sequence belongs to the prefoldin subunit beta family. Heterohexamer of two alpha and four beta subunits.

The protein localises to the cytoplasm. In terms of biological role, molecular chaperone capable of stabilizing a range of proteins. Seems to fulfill an ATP-independent, HSP70-like function in archaeal de novo protein folding. In Halobacterium salinarum (strain ATCC 29341 / DSM 671 / R1), this protein is Prefoldin subunit beta.